We begin with the raw amino-acid sequence, 341 residues long: Protein quaking-A (341 aa).

Positions 87–153 (FVPVKEYPDY…WEHLNEDLHV (67 aa)) constitute a KH domain. The SH3-binding signature appears at 276 to 279 (PPTP). The Nuclear localization signal signature appears at 324–330 (RVHPYQR).

Belongs to the quaking family. In terms of assembly, homodimer; does not require RNA to homodimerize.

Its subcellular location is the cytoplasm. It is found in the nucleus. In terms of biological role, RNA reader protein, which recognizes and binds specific RNAs, thereby regulating RNA metabolic processes, such as pre-mRNA splicing, circular RNA (circRNA) formation, mRNA export, mRNA stability and/or translation. Involved in various cellular processes, such as mRNA storage into stress granules, apoptosis, interferon response, glial cell fate and development. Binds to the 5'-NACUAAY-N(1,20)-UAAY-3' RNA core sequence. Acts as a mRNA modification reader that specifically recognizes and binds mRNA transcripts modified by internal N(7)-methylguanine (m7G). Promotes the formation of circular RNAs (circRNAs): acts by binding to sites flanking circRNA-forming exons. CircRNAs are produced by back-splicing circularization of pre-mRNAs. Required to protect and promote stability of mRNAs which promotes oligodendrocyte differentiation. Acts as an important regulator of muscle development: required during early skeletal myofibril formation by regulating the accumulation of the muscle-specific tropomyosin-3 (tpm3) transcripts. This Danio rerio (Zebrafish) protein is Protein quaking-A.